The sequence spans 93 residues: Alpha-defensin 24 (93 aa).

An N-terminal signal peptide occupies residues 1 to 19 (MKTLILLSALVLLAFQVQA). Positions 20 to 58 (DPIQNTDEETKTEEQPGEEDQAVSVSFGDPEGASLQEES) are excised as a propeptide. The interval 23-54 (QNTDEETKTEEQPGEEDQAVSVSFGDPEGASL) is disordered. Intrachain disulfides connect cysteine 64-cysteine 92, cysteine 66-cysteine 81, and cysteine 71-cysteine 91.

Belongs to the alpha-defensin family.

It is found in the secreted. In terms of biological role, may have microbicidal activities. In Mus musculus (Mouse), this protein is Alpha-defensin 24 (Defa24).